A 541-amino-acid polypeptide reads, in one-letter code: 2-hydroxyacylsphingosine 1-beta-galactosyltransferase (541 aa).

A signal peptide spans 1–20 (MKSYTPYFILLWSAVGIAKA). 3 N-linked (GlcNAc...) asparagine glycosylation sites follow: Asn78, Asn333, and Asn442. Residues 472-492 (YFLLDIAFVLLLGAALLYFLL) form a helical membrane-spanning segment.

The protein belongs to the UDP-glycosyltransferase family.

It localises to the membrane. Its subcellular location is the endoplasmic reticulum. It carries out the reaction an N-acylsphing-4-enine + UDP-alpha-D-galactose = a beta-D-galactosyl-(1&lt;-&gt;1')-N-acylsphing-4-enine + UDP + H(+). It catalyses the reaction an N-acyl-sphingoid base + UDP-alpha-D-galactose = a D-galactosylceramide + UDP + H(+). The catalysed reaction is N-(2-hydroxy-hexanoyl)-sphing-4-enine + UDP-alpha-D-galactose = N-(2-hydroxy-hexanoyl)-beta-D-galactosyl-sphing-4-enine + UDP + H(+). The enzyme catalyses N-(2-hydroxy-hexanoyl)-sphinganine + UDP-alpha-D-galactose = N-(2-hydroxyhexanoyl)-beta-D-galactosylsphinganine + UDP + H(+). Its pathway is sphingolipid metabolism; galactosylceramide biosynthesis. Its function is as follows. Catalyzes the transfer of galactose to ceramide, a key enzymatic step in the biosynthesis of galactocerebrosides, which are abundant sphingolipids of the myelin membrane of the central nervous system and peripheral nervous system. Galactosylates both hydroxy- and non-hydroxy fatty acid-containing ceramides and diglycerides. The protein is 2-hydroxyacylsphingosine 1-beta-galactosyltransferase of Homo sapiens (Human).